We begin with the raw amino-acid sequence, 348 residues long: Protein-glutamate methylesterase/protein-glutamine glutaminase 5 (348 aa).

In terms of domain architecture, Response regulatory spans 8-125 (RVLVVDDSAF…TERLYELGGE (118 aa)). At D59 the chain carries 4-aspartylphosphate. The CheB-type methylesterase domain maps to 157 to 348 (RAAAKSLVVV…MLALLRRHVR (192 aa)). Active-site residues include S169, H196, and D292.

Belongs to the CheB family. Post-translationally, phosphorylated by CheA. Phosphorylation of the N-terminal regulatory domain activates the methylesterase activity.

The protein resides in the cytoplasm. It carries out the reaction [protein]-L-glutamate 5-O-methyl ester + H2O = L-glutamyl-[protein] + methanol + H(+). The enzyme catalyses L-glutaminyl-[protein] + H2O = L-glutamyl-[protein] + NH4(+). In terms of biological role, involved in chemotaxis. Part of a chemotaxis signal transduction system that modulates chemotaxis in response to various stimuli. Catalyzes the demethylation of specific methylglutamate residues introduced into the chemoreceptors (methyl-accepting chemotaxis proteins or MCP) by CheR. Also mediates the irreversible deamidation of specific glutamine residues to glutamic acid. This is Protein-glutamate methylesterase/protein-glutamine glutaminase 5 from Myxococcus xanthus (strain DK1622).